Here is a 77-residue protein sequence, read N- to C-terminus: DNA-directed RNA polymerase subunit omega (77 aa).

Belongs to the RNA polymerase subunit omega family. The RNAP catalytic core consists of 2 alpha, 1 beta, 1 beta' and 1 omega subunit. When a sigma factor is associated with the core the holoenzyme is formed, which can initiate transcription.

The enzyme catalyses RNA(n) + a ribonucleoside 5'-triphosphate = RNA(n+1) + diphosphate. In terms of biological role, promotes RNA polymerase assembly. Latches the N- and C-terminal regions of the beta' subunit thereby facilitating its interaction with the beta and alpha subunits. This Nitratidesulfovibrio vulgaris (strain ATCC 29579 / DSM 644 / CCUG 34227 / NCIMB 8303 / VKM B-1760 / Hildenborough) (Desulfovibrio vulgaris) protein is DNA-directed RNA polymerase subunit omega.